A 359-amino-acid polypeptide reads, in one-letter code: Molybdenum import ATP-binding protein ModC (359 aa).

The region spanning 1–233 is the ABC transporter domain; it reads MSGLTVSIRG…IDAESEGGGV (233 aa). 32-39 is an ATP binding site; it reads GHSGAGKT. Residues 289–355 form the Mop domain; the sequence is AISIRNLLPV…VKAVSVDRAA (67 aa).

The protein belongs to the ABC transporter superfamily. Molybdate importer (TC 3.A.1.8) family. The complex is composed of two ATP-binding proteins (ModC), two transmembrane proteins (ModB) and a solute-binding protein (ModA).

It is found in the cell inner membrane. The catalysed reaction is molybdate(out) + ATP + H2O = molybdate(in) + ADP + phosphate + H(+). Its function is as follows. Part of the ABC transporter complex ModABC involved in molybdenum import. Responsible for energy coupling to the transport system. The sequence is that of Molybdenum import ATP-binding protein ModC from Brucella melitensis biotype 1 (strain ATCC 23456 / CCUG 17765 / NCTC 10094 / 16M).